Reading from the N-terminus, the 287-residue chain is Undecaprenyl-diphosphatase (287 aa).

The next 7 membrane-spanning stretches (helical) occupy residues 6–26, 45–65, 89–109, 111–131, 204–224, 238–258, and 266–286; these read LHLLKAFFLGIVEGLTEFIPV, SGKVFEVVIQFGSILAVMWIF, NLLLAFLPAAVIGAIFIKSIK, VFYHPGVVAVTLVVGGFIMLW, ATEFSFFLAMPTMLGAAVYDL, AIAVGFVAAFLSALVVVRAVL, and YRVFAWYRIALGLVVAAWIYA.

The protein belongs to the UppP family.

It is found in the cell inner membrane. It carries out the reaction di-trans,octa-cis-undecaprenyl diphosphate + H2O = di-trans,octa-cis-undecaprenyl phosphate + phosphate + H(+). Its function is as follows. Catalyzes the dephosphorylation of undecaprenyl diphosphate (UPP). Confers resistance to bacitracin. This Bordetella pertussis (strain Tohama I / ATCC BAA-589 / NCTC 13251) protein is Undecaprenyl-diphosphatase.